A 715-amino-acid polypeptide reads, in one-letter code: Polyribonucleotide nucleotidyltransferase (715 aa).

Residues aspartate 490 and aspartate 496 each coordinate Mg(2+). Residues 557-616 (PRIETMTIPTDKIREVIGSGGKVIREIVETSGAKVDISDDGTIKIASANADSIKKAYDMI) form the KH domain. Positions 626-694 (GKIYVGKVVK…DRGKVRLGMK (69 aa)) constitute an S1 motif domain.

Belongs to the polyribonucleotide nucleotidyltransferase family. Mg(2+) is required as a cofactor.

The protein resides in the cytoplasm. The catalysed reaction is RNA(n+1) + phosphate = RNA(n) + a ribonucleoside 5'-diphosphate. Its function is as follows. Involved in mRNA degradation. Catalyzes the phosphorolysis of single-stranded polyribonucleotides processively in the 3'- to 5'-direction. This Paracoccus denitrificans (strain Pd 1222) protein is Polyribonucleotide nucleotidyltransferase.